Consider the following 1170-residue polypeptide: MELLRGLGVLFLLHMCGSNRIPESGGDNGVFDIFELIGGARRGPGRRLVKGQDLSSPAFRIENANLIPAVPDDKFQDLLDAVWADKGFIFLASLRQMKKTRGTLLAVERKDNTGQIFSVVSNGKAGTLDLSLSLPGKQQVVSVEEALLATGQWKSITLFVQEDRAQLYIDCDKMESAELDVPIQSIFTRDLASVARLRVAKGDVNDNFQGVLQNVRFVFGTTPEDILRNKGCSSSTNVLLTLDNNVVNGSSPAIRTNYIGHKTKDLQAICGLSCDELSSMVLELKGLRTIVTTLQDSIRKVTEENRELVSELKRPPLCFHNGVQYKNNEEWTVDSCTECHCQNSVTICKKVSCPIMPCSNATVPDGECCPRCWPSDSADDGWSPWSEWTSCSATCGNGIQQRGRSCDSLNNRCEGSSVQTRTCHIQECDKRFKQDGGWSHWSPWSSCSVTCGDGVITRIRLCNSPSPQMNGKPCEGEARETKACKKDACPINGGWGPWSPWDICSVTCGGGVQRRSRLCNNPTPQFGGKDCVGDVTENQVCNKQDCPIDGCLSNPCFAGAKCTSYPDGSWKCGACPPGYSGNGIQCKDVDECKEVPDACFNHNGEHRCKNTDPGYNCLPCPPRFTGSQPFGRGVEHAMANKQVCKPRNPCTDGTHDCNKNAKCNYLGHYSDPMYRCECKPGYAGNGIICGEDTDLDGWPNENLVCVANATYHCKKDNCPNLPNSGQEDYDKDGIGDACDDDDDNDKIPDDRDNCPFHYNPAQYDYDRDDVGDRCDNCPYNHNPDQADTDKNGEGDACAVDIDGDGILNERDNCQYVYNVDQRDTDMDGVGDQCDNCPLEHNPDQLDSDSDLIGDTCDNNQDIDEDGHQNNLDNCPYVPNANQADHDKDGKGDACDHDDDNDGIPDDRDNCRLVPNPDQKDSDGDGRGDACKDDFDHDNVPDIDDICPENFDISETDFRRFQMIPLDPKGTSQNDPNWVVRHQGKELVQTVNCDPGLAVGYDEFNAVDFSGTFFINTERDDDYAGFVFGYQSSSRFYVVMWKQVTQSYWDTNPTRAQGYSGLSVKVVNSTTGPGEHLRNALWHTGNTPGQVRTLWHDPRHIGWKDFTAYRWRLSHRPKTGYIRVVMYEGKKIMADSGPIYDKTYAGGRLGLFVFSQEMVFFSDMKYECRDS.

The signal sequence occupies residues 1 to 18; the sequence is MELLRGLGVLFLLHMCGS. A heparin-binding region spans residues 47–95; the sequence is RLVKGQDLSSPAFRIENANLIPAVPDDKFQDLLDAVWADKGFIFLASLR. A Laminin G-like domain is found at 56–270; the sequence is SPAFRIENAN…HKTKDLQAIC (215 aa). A disulfide bridge connects residues C171 and C232. N-linked (GlcNAc...) asparagine glycans are attached at residues N248 and N360. In terms of domain architecture, VWFC spans 316-373; it reads PLCFHNGVQYKNNEEWTVDSCTECHCQNSVTICKKVSCPIMPCSNATVPDGECCPRCW. 3 consecutive TSP type-1 domains span residues 379 to 429, 435 to 490, and 492 to 547; these read DDGW…QECD, DGGW…DACP, and NGGW…QDCP. The C-linked (Man) tryptophan glycan is linked to W385. Disulfide bonds link C391–C423, C395–C428, and C406–C413. Residues W438 and W441 are each glycosylated (C-linked (Man) tryptophan). 3 disulfides stabilise this stretch: C447–C484, C451–C489, and C462–C474. Residue T450 is glycosylated (O-linked (Fuc...) threonine). Residue W498 is glycosylated (C-linked (Man) tryptophan). Cystine bridges form between C504–C541, C508–C546, C519–C531, C551–C562, C556–C572, C575–C586, C592–C608, C599–C617, C620–C644, C650–C663, C657–C676, C678–C689, C705–C713, C718–C738, C754–C774, C777–C797, C813–C833, C836–C856, C874–C894, C910–C930, and C946–C1167. The O-linked (Fuc...) threonine glycan is linked to T507. Residues 531 to 1152 are involved in retention in extracellular matrix (ECM); involved in trimer formation; that stretch reads CVGDVTENQV…YAGGRLGLFV (622 aa). Residues 547–587 form the EGF-like 1 domain; it reads PIDGCLSNPCFAGAKCTSYPDGSWKCGACPPGYSGNGIQCK. The O-linked (Xyl) serine glycan is linked to S553. The EGF-like 2 domain maps to 646–690; it reads PRNPCTDGTHDCNKNAKCNYLGHYSDPMYRCECKPGYAGNGIICG. TSP type-3 repeat units follow at residues 691-726, 727-762, 763-785, 786-821, 822-844, 845-882, 883-918, and 919-954; these read EDTD…NSGQ, EDYD…NPAQ, YDYD…NPDQ, ADTD…NVDQ, RDTD…NPDQ, LDSD…NANQ, ADHD…NPDQ, and KDSD…DISE. A glycan (N-linked (GlcNAc...) asparagine) is linked at N708. Positions 840–934 are disordered; the sequence is HNPDQLDSDS…GRGDACKDDF (95 aa). 2 stretches are compositionally biased toward basic and acidic residues: residues 883–894 and 917–934; these read ADHDKDGKGDAC and DQKD…KDDF. The Cell attachment site signature appears at 926-928; that stretch reads RGD. The region spanning 958 to 1170 is the TSP C-terminal domain; it reads RRFQMIPLDP…SDMKYECRDS (213 aa). An N-linked (GlcNAc...) asparagine glycan is attached at N1067.

It belongs to the thrombospondin family. As to quaternary structure, homotrimer; disulfide-linked. Can bind to fibrinogen, fibronectin, laminin, type V collagen and integrins alpha-V/beta-1, alpha-V/beta-3 and alpha-IIb/beta-3. Binds heparin. Interacts (via the C-terminal domain) with CD47. Interacts (via the TSP type I repeats) with CD36; the interaction conveys an antiangiogenic effect. Interacts (via the TSP type I repeats) with HRG; the interaction blocks the antiangiogenic effect of THBS1 with CD36. Interacts with ATF6 (via lumenal domain). Interacts with FN1; this interaction is enhanced by TNFAIP6, which may act as a bridging molecule between FN1 and THBS1. Interacts with SIRPA; the interaction stimulates phosphorylation of SIRPA.

Its subcellular location is the secreted. It localises to the cell surface. The protein resides in the extracellular space. It is found in the extracellular matrix. The protein localises to the endoplasmic reticulum. Its subcellular location is the sarcoplasmic reticulum. Its function is as follows. Adhesive glycoprotein that mediates cell-to-cell and cell-to-matrix interactions. Multifunctional, involved in inflammation, angiogenesis, wound healing, reactive oxygen species (ROS) signaling, nitrous oxide (NO) signaling, apoptosis, senescence, aging, cellular self-renewal, stemness, and cardiovascular and metabolic homeostasis. Negatively modulates dendritic cell activation and cytokine release, as part of an autocrine feedback loop, contributing to the resolution of inflammation and immune homeostasis. Ligand for receptor CD47. Modulates nitrous oxide (NO) signaling via CD47, hence playing a role as a pressor agent, supporting blood pressure. Plays a role in endothelial cell senescence, acting via CD47, by increasing the abundance and activation of NADPH oxidase NOX1, and so generating excess ROS. Inhibits stem cell self-renewal, acting via CD47 signaling, probably by regulation of the stem cell transcription factors POU5F1/OCT4, SOX2, MYC/c-Myc and KLF4. Negatively modulates wound healing, acting via CD47. Ligand for receptor CD36. Involved in inducing apoptosis in podocytes in response to elevated free fatty acids, acting via CD36. Plays a role in suppressing angiogenesis, acting, depending on context, via CD36 or CD47. Promotes cellular senescence in a TP53-CDKN1A-RB1 signaling-dependent manner. Ligand for immunoglobulin-like cell surface receptor SIRPA. Involved in ROS signaling in non-phagocytic cells, stimulating NADPH oxidase-derived ROS production, acting via interaction with SIRPA. Plays a role in metabolic dysfunction in diet-induced obesity, perhaps acting by exacerbating adipose inflammatory activity; its effects may be mediated, at least in part, through enhanced adipocyte proliferation. Plays a role in ER stress response, via its interaction with the activating transcription factor 6 alpha (ATF6) which produces adaptive ER stress response factors. May be involved in age-related conditions, including metabolic dysregulation, during normal aging. This is Thrombospondin-1 (Thbs1) from Mus musculus (Mouse).